The sequence spans 320 residues: Lipoyl synthase (320 aa).

The interval 1–27 (MRVEIDHRNSGGGKLRHPEKQHRPDNP) is disordered. The span at 16–25 (RHPEKQHRPD) shows a compositional bias: basic and acidic residues. Residues C61, C66, C72, C87, C91, C94, and S300 each coordinate [4Fe-4S] cluster. In terms of domain architecture, Radical SAM core spans 73 to 289 (WSQRHATMMI…AAMARAKGFL (217 aa)).

It belongs to the radical SAM superfamily. Lipoyl synthase family. [4Fe-4S] cluster serves as cofactor.

It localises to the cytoplasm. It catalyses the reaction [[Fe-S] cluster scaffold protein carrying a second [4Fe-4S](2+) cluster] + N(6)-octanoyl-L-lysyl-[protein] + 2 oxidized [2Fe-2S]-[ferredoxin] + 2 S-adenosyl-L-methionine + 4 H(+) = [[Fe-S] cluster scaffold protein] + N(6)-[(R)-dihydrolipoyl]-L-lysyl-[protein] + 4 Fe(3+) + 2 hydrogen sulfide + 2 5'-deoxyadenosine + 2 L-methionine + 2 reduced [2Fe-2S]-[ferredoxin]. Its pathway is protein modification; protein lipoylation via endogenous pathway; protein N(6)-(lipoyl)lysine from octanoyl-[acyl-carrier-protein]: step 2/2. Catalyzes the radical-mediated insertion of two sulfur atoms into the C-6 and C-8 positions of the octanoyl moiety bound to the lipoyl domains of lipoate-dependent enzymes, thereby converting the octanoylated domains into lipoylated derivatives. This is Lipoyl synthase from Acidiphilium cryptum (strain JF-5).